Here is a 391-residue protein sequence, read N- to C-terminus: Phosphopentomutase (391 aa).

Mn(2+) contacts are provided by D12, D285, H290, D326, H327, and H338.

The protein belongs to the phosphopentomutase family. Mn(2+) is required as a cofactor.

Its subcellular location is the cytoplasm. It catalyses the reaction 2-deoxy-alpha-D-ribose 1-phosphate = 2-deoxy-D-ribose 5-phosphate. The enzyme catalyses alpha-D-ribose 1-phosphate = D-ribose 5-phosphate. Its pathway is carbohydrate degradation; 2-deoxy-D-ribose 1-phosphate degradation; D-glyceraldehyde 3-phosphate and acetaldehyde from 2-deoxy-alpha-D-ribose 1-phosphate: step 1/2. In terms of biological role, isomerase that catalyzes the conversion of deoxy-ribose 1-phosphate (dRib-1-P) and ribose 1-phosphate (Rib-1-P) to deoxy-ribose 5-phosphate (dRib-5-P) and ribose 5-phosphate (Rib-5-P), respectively. The sequence is that of Phosphopentomutase from Herpetosiphon aurantiacus (strain ATCC 23779 / DSM 785 / 114-95).